The chain runs to 162 residues: Disulfide bond formation protein B (162 aa).

Topologically, residues 1–8 (MTPLFRKA) are cytoplasmic. The chain crosses the membrane as a helical span at residues 9–25 (VWLLFAVSVCAFAGSLA). Over 26–43 (AQYVLGMEPCVLCISQRL) the chain is Periplasmic. An intrachain disulfide couples cysteine 35 to cysteine 38. The helical transmembrane segment at 44-60 (CVLATALCAAIVLMCRP) threads the bilayer. Residues 61 to 67 (RRKAGGL) lie on the Cytoplasmic side of the membrane. Residues 68–85 (FGAVFISIPAVTGISVAA) form a helical membrane-spanning segment. Over 86-141 (YQLWLQSLPPGTAPSCGAPWTFRLKGWPLFDWFEPVVRGFGNCAEPDYLLGVALPV) the chain is Periplasmic. A disulfide bridge links cysteine 101 with cysteine 128. Residues 142-160 (WSVAYFLAVALTVWWAWAR) traverse the membrane as a helical segment. Residues 161-162 (AK) are Cytoplasmic-facing.

It belongs to the DsbB family.

The protein resides in the cell inner membrane. Functionally, required for disulfide bond formation in some periplasmic proteins. Acts by oxidizing the DsbA protein. In Neisseria meningitidis serogroup A / serotype 4A (strain DSM 15465 / Z2491), this protein is Disulfide bond formation protein B.